The primary structure comprises 563 residues: MSSSPPALKKFRKRSPKSCLICRRRKVKCDRQQPCSRCKERNEVCTYADDTIDKMNVGPHPSHSENASDSETTLEVSPDINPKKNEKFDFYGWRSLFELIKYRKDSDMCSSRPSFSIQAYSSYKDNVVVESLANLLPPFCISQKIVNLFFKTLNVVCPIYDQETVEKSLNNIESPESFSYEDAFTLLPIIAATIQLSDLPDVILNFYNSAGITPLESSRLINLKLNEISEQEYKHLCLPDKEIIQMLLLRAYATKFRTRIRGVNTDLCRSIHVSTLVTPLFQVTEKIGKNTSDLWFALCEIDGLECVLKYRPPFIQHDTYGRLKPLRCFFNDDISYNFHLLLGRLLDCGVSIYKSVHSLTVSKFIDKLESYESQLSLILVDIEAKFYDPSNEDIQFRYIFLKMVFWTARVNLYQCFITLDSGILEDEETIIGNLGESCIQCVRLLISQITILEKRGWLLVALLEIIHALMLAAFCRDKGFEVPSDLGDITLYVQERMVDIVTFDDGMAVRFGYVLRFINSMLHPNEPPMQDAEPETTEDPSKLFADIFDFTSNYFIPSALLDQ.

The segment at residues 19–45 is a DNA-binding region (zn(2)-C6 fungal-type); sequence CLICRRRKVKCDRQQPCSRCKERNEVC. The tract at residues 56–78 is disordered; that stretch reads NVGPHPSHSENASDSETTLEVSP. Positions 64–75 are enriched in polar residues; that stretch reads SENASDSETTLE.

It is found in the nucleus. This is an uncharacterized protein from Schizosaccharomyces pombe (strain 972 / ATCC 24843) (Fission yeast).